A 156-amino-acid polypeptide reads, in one-letter code: ATP synthase subunit b (156 aa).

The helical transmembrane segment at 5–25 (LTLIGQAIAFAVFVWFCMKFV) threads the bilayer.

Belongs to the ATPase B chain family. F-type ATPases have 2 components, F(1) - the catalytic core - and F(0) - the membrane proton channel. F(1) has five subunits: alpha(3), beta(3), gamma(1), delta(1), epsilon(1). F(0) has three main subunits: a(1), b(2) and c(10-14). The alpha and beta chains form an alternating ring which encloses part of the gamma chain. F(1) is attached to F(0) by a central stalk formed by the gamma and epsilon chains, while a peripheral stalk is formed by the delta and b chains.

It localises to the cell inner membrane. Functionally, f(1)F(0) ATP synthase produces ATP from ADP in the presence of a proton or sodium gradient. F-type ATPases consist of two structural domains, F(1) containing the extramembraneous catalytic core and F(0) containing the membrane proton channel, linked together by a central stalk and a peripheral stalk. During catalysis, ATP synthesis in the catalytic domain of F(1) is coupled via a rotary mechanism of the central stalk subunits to proton translocation. In terms of biological role, component of the F(0) channel, it forms part of the peripheral stalk, linking F(1) to F(0). This Chromohalobacter salexigens (strain ATCC BAA-138 / DSM 3043 / CIP 106854 / NCIMB 13768 / 1H11) protein is ATP synthase subunit b.